The primary structure comprises 1201 residues: MAGKVTFLGSNSSFSPDGKTQGFKSASADTSRFVSLSKPQHELDGSAQAQISRCFNKLRSLSPSDSASLKTELNLLFDELISENYSSSNHDNIPPEVVCEILVQASRLVPLSQEHLIIKLCQMIHQLLNQLQIIVDEHTLDVLVSYCSRALRTCSSWTHSEVLLALSSLVYGNGSKCQRYLPDLLGPSGVLVKYGDPKQPDIELRRSAVHCIANLCLSVPSQPYLEEPYKSVCYGILLRTLQSTKPPDVDDIVFCTLLQSALKGMQYFLNGGKWKAVPNQDLGALLAVLKRFMFYGLPGISVEMPQVLYPAPLPQYETIPAVKPEPAQDTPAQKKTAASQQKKRKSRGKGKKGAGEGKQDGEADDVSAAGGGDQSGWSHGSQSSMLTSPSVATPQLYPSWKKCSSDSEFSDPEGGMQSKLRLYQARVRQSSLQCFLAVVKCVEKRILYGYWSSFVPDAPGIGGPPPLTLLTIALKDPLPKVRAGSLQVLSALLEGSRQFLSTAEDTGAPRQAFTPFSATLAASIRELHRGLLLALIAESSCQTLTQVLKCLAHLVSNVPYNRLRPGLLSPLWKQIRPYVRHRDVNVRVSSLTLFGALVSTQAPLPEVQLLLQQPGSASSLGSGISTPQESPLSWRQPARRDEEASSPAAAEGPEGPCWLLQLCVSLVTQPREEPYSDSDAGGSNGAPLEPSPVRLEALQVLAHLVKGYFSLAQASLLELGQLSARCLTEQDPSVQLHGAKLLEELGTGIIQQYRADANTPQSAKRVPVNQVVQFWSEVLGGPLISALQNEHHPTLQTSACDTLSSILPQAFSQLPDKTQVLCITILLGLTYSENSLVKAAAVRALGVYILFPCLREDVMFVADTANAILTALDDRSPNVRAKAAWSLGNLTDTLIVNMQSVGLEFQEDFSDMLLLNMLRSATKASADKDRVKSNAVRALGNLLHFLQPGHLGKPVFEQPLLEAMRALIDTVRGDATMKVRWNACYALGNAFRNQHLPLGSAVWSTEAFSALSCVVTSCKNFKVRIKSAAALSVPATRECYGDSQQFSEVWRSLAQALEHSEETEDFLEYRYCASLRSQLCRALLHLLSLCQPDDLPALGSSVSGQSRPALQALLISHLRDEGLVPSAGADGEEALDHSTPEDGWTLLTDTLTRLKGLLGEPVMDSNEDLESVLSFLQDVVRNFEEMKEAESKESSLVLGKS.

The disordered stretch occupies residues 1-25 (MAGKVTFLGSNSSFSPDGKTQGFKS). The stretch at 182–221 (PDLLGPSGVLVKYGDPKQPDIELRRSAVHCIANLCLSVPS) is one HEAT 1 repeat. The interval 321-390 (AVKPEPAQDT…SQSSMLTSPS (70 aa)) is disordered. Basic residues predominate over residues 341 to 352 (QKKRKSRGKGKK). Residues 375-390 (SGWSHGSQSSMLTSPS) are compositionally biased toward polar residues. HEAT repeat units follow at residues 460–498 (GIGG…GSRQ), 523–560 (SIRE…NVPY), and 566–603 (GLLS…TQAP). Over residues 618–633 (SSLGSGISTPQESPLS) the composition is skewed to polar residues. The tract at residues 618–653 (SSLGSGISTPQESPLSWRQPARRDEEASSPAAAEGP) is disordered.

The chain is HEAT repeat-containing protein 6 (heatr6) from Danio rerio (Zebrafish).